A 336-amino-acid polypeptide reads, in one-letter code: Protein SphX (336 aa).

A signal peptide spans 1 to 27 (MFDLSRLSRGIVPMALLLLGISACTPS).

The protein belongs to the PstS family.

May be involved in the system for phosphate transport across the cytoplasmic membrane. The chain is Protein SphX (sphX) from Synechocystis sp. (strain ATCC 27184 / PCC 6803 / Kazusa).